We begin with the raw amino-acid sequence, 381 residues long: Acetylornithine deacetylase (381 aa).

Histidine 79 contributes to the Zn(2+) binding site. Residue aspartate 81 is part of the active site. Aspartate 111 is a Zn(2+) binding site. The active site involves glutamate 143. Zn(2+) contacts are provided by glutamate 144, glutamate 168, and histidine 354.

Belongs to the peptidase M20A family. ArgE subfamily. In terms of assembly, homodimer. Requires Zn(2+) as cofactor. It depends on Co(2+) as a cofactor. The cofactor is glutathione.

Its subcellular location is the cytoplasm. The enzyme catalyses N(2)-acetyl-L-ornithine + H2O = L-ornithine + acetate. The protein operates within amino-acid biosynthesis; L-arginine biosynthesis; L-ornithine from N(2)-acetyl-L-ornithine (linear): step 1/1. In terms of biological role, catalyzes the hydrolysis of the amide bond of N(2)-acetylated L-amino acids. Cleaves the acetyl group from N-acetyl-L-ornithine to form L-ornithine, an intermediate in L-arginine biosynthesis pathway, and a branchpoint in the synthesis of polyamines. This is Acetylornithine deacetylase from Buchnera aphidicola subsp. Schizaphis graminum (strain Sg).